Reading from the N-terminus, the 150-residue chain is Auxin-binding protein 5 (150 aa).

An N-terminal signal peptide occupies residues 1–41 (MVRRRPATGAAQRPQLAAVGRGLLLASVLAAAASSLPVAES). Histidine 98, histidine 100, and glutamate 104 together coordinate Zn(2+). The N-linked (GlcNAc...) asparagine glycan is linked to asparagine 136. Histidine 147 provides a ligand contact to Zn(2+).

Homodimer.

It is found in the endoplasmic reticulum lumen. In terms of biological role, this is probably a receptor for the plant hormone auxin. The protein is Auxin-binding protein 5 (ABP5) of Zea mays (Maize).